We begin with the raw amino-acid sequence, 325 residues long: MITDRQLSILNAIVEDYVDFGQPVGSKTLIERHNLNVSPATIRNEMKQLEDLNYIEKTHSSSGRSPSQLGFRYYVNRLLEQTSHQKTNKLRRLNQLLVENQYDVSSALTYFADELSNISQYTTLVVHPNHKQDIINNVHLIRANPNLVIMVIVFSSGHVEHVHLASDIPFNNDKLNTISNFVTNKLTEFNQNLQDDIVSFVQSEQEEIFINKLLNTMNNHISNQSNSIYMGGKVKLIDALNESNVSSIQPILQYIESNRIAELLQDISSPNINVKIGNEIDDSLSDISIVTSQYHFDETLKGQIAVIGPTAMHYQNVIQLLNRIW.

It belongs to the HrcA family.

In terms of biological role, negative regulator of class I heat shock genes (grpE-dnaK-dnaJ and groELS operons). Prevents heat-shock induction of these operons. This chain is Heat-inducible transcription repressor HrcA, found in Staphylococcus aureus (strain USA300).